A 216-amino-acid polypeptide reads, in one-letter code: Transmembrane emp24 domain-containing protein eca (216 aa).

A signal peptide spans 1–20 (MRDQFISLALILCVLHSACG). Topologically, residues 21-182 (LYFHISETER…FRHTSESTNS (162 aa)) are lumenal. Residues 30–126 (RKCFIEEVPD…QLRVHLDIQV (97 aa)) form the GOLD domain. Residues 134-164 (ANVAQKEKLTELQLRIRQLLDQVEQITKEQN) adopt a coiled-coil conformation. The chain crosses the membrane as a helical span at residues 183 to 203 (RVLWWSLAQTVVLVCMGFWQM). At 204–216 (RHLKSFFEAKKLV) the chain is on the cytoplasmic side. The short motif at 213 to 216 (KKLV) is the Prevents secretion from ER element.

The protein belongs to the EMP24/GP25L family.

It is found in the endoplasmic reticulum membrane. Eca and bai are essential, though not redundant, for dorsoventral patterning of the embryo. Specifically required during early embryogenesis for the activity of maternal tkv, while the zygotic tkv is not affected. Involved in Golgi organization. This is Transmembrane emp24 domain-containing protein eca from Drosophila simulans (Fruit fly).